The following is a 499-amino-acid chain: Lysine--tRNA ligase (499 aa).

Mg(2+) is bound by residues E408 and E415.

It belongs to the class-II aminoacyl-tRNA synthetase family. Homodimer. It depends on Mg(2+) as a cofactor.

It is found in the cytoplasm. It carries out the reaction tRNA(Lys) + L-lysine + ATP = L-lysyl-tRNA(Lys) + AMP + diphosphate. The sequence is that of Lysine--tRNA ligase from Thermoanaerobacter sp. (strain X514).